Here is a 212-residue protein sequence, read N- to C-terminus: External core antigen (212 aa).

Positions M1–A19 are cleaved as a signal peptide. Residues G25–L27 form an HBEAG region. Residues N165–C212 are disordered. The span at V178–S205 shows a compositional bias: basic residues. One copy of the 1; half-length repeat lies at S184–P190. A 3 X 8 AA repeats of S-P-R-R-R-R-S-Q region spans residues S184 to Q206. A propeptide spanning residues S184–C212 is cleaved from the precursor. Tandem repeats lie at residues S191 to Q198 and S199 to Q206.

It belongs to the orthohepadnavirus precore antigen family. As to quaternary structure, homodimerizes. Post-translationally, phosphorylated. In terms of processing, cleaved by host furin.

It is found in the secreted. The protein localises to the host nucleus. Its function is as follows. May regulate immune response to the intracellular capsid in acting as a T-cell tolerogen, by having an immunoregulatory effect which prevents destruction of infected cells by cytotoxic T-cells. This immune regulation may predispose to chronicity during perinatal infections and prevent severe liver injury during adult infections. This chain is External core antigen, found in Gibbon hepatitis B virus subtype ayw3q (isolate Hope) (HBVgbn).